Consider the following 74-residue polypeptide: RNA-binding protein Hfq (74 aa).

The Sm domain occupies 9 to 69; it reads DQFLNQLRKE…ISTFVPQKNV (61 aa).

This sequence belongs to the Hfq family. In terms of assembly, homohexamer.

Its function is as follows. RNA chaperone that binds small regulatory RNA (sRNAs) and mRNAs to facilitate mRNA translational regulation in response to envelope stress, environmental stress and changes in metabolite concentrations. Also binds with high specificity to tRNAs. The polypeptide is RNA-binding protein Hfq (Bacillus cereus (strain Q1)).